Here is a 392-residue protein sequence, read N- to C-terminus: Glutamyl-tRNA reductase (392 aa).

Residues 38 to 41, Ser-86, 91 to 93, and Gln-97 each bind substrate; these read TCNR and EDQ. The active-site Nucleophile is Cys-39. 165–170 lines the NADP(+) pocket; it reads GAGEMA.

This sequence belongs to the glutamyl-tRNA reductase family. As to quaternary structure, homodimer.

The catalysed reaction is (S)-4-amino-5-oxopentanoate + tRNA(Glu) + NADP(+) = L-glutamyl-tRNA(Glu) + NADPH + H(+). Its pathway is porphyrin-containing compound metabolism; protoporphyrin-IX biosynthesis; 5-aminolevulinate from L-glutamyl-tRNA(Glu): step 1/2. Functionally, catalyzes the NADPH-dependent reduction of glutamyl-tRNA(Glu) to glutamate 1-semialdehyde (GSA). This chain is Glutamyl-tRNA reductase, found in Methanocaldococcus jannaschii (strain ATCC 43067 / DSM 2661 / JAL-1 / JCM 10045 / NBRC 100440) (Methanococcus jannaschii).